The following is a 2879-amino-acid chain: Peramine synthetase ppzA (2879 aa).

Residues 1-12 (MTYDEGGHRNNE) are compositionally biased toward basic and acidic residues. The interval 1–52 (MTYDEGGHRNNEETPQDVNMSSNNEGMSTSSPTGSYGEIIGQATVSVPQEDQ) is disordered. Residues 16 to 34 (QDVNMSSNNEGMSTSSPTG) show a composition bias toward polar residues. Residues 351–747 (QEQCRLQPNT…VGRKDTQVKI (397 aa)) form an adenylation 1 region. In terms of domain architecture, Carrier 1 spans 882-958 (QPLSDMERLL…DLSRQSKYIE (77 aa)). Position 919 is an O-(pantetheine 4'-phosphoryl)serine (serine 919). The tract at residues 997-1410 (DAYPCTPLQE…ITILTTEDLE (414 aa)) is condensation. The interval 1433-1827 (DKVQHRPNAP…LSFVRRKDTT (395 aa)) is adenylation 2. Residues 1958-2050 (LEIGCGSGMM…KYLVKLIQDI (93 aa)) are methylation (Met) domain. In terms of domain architecture, Carrier 2 spans 2370–2448 (WPTTDTGKEL…RLLLDCCCDD (79 aa)). Serine 2407 carries the O-(pantetheine 4'-phosphoryl)serine modification. A thiesterase (TE) domain region spans residues 2500–2817 (TVLLTGANGF…LEDMLQDLDD (318 aa)).

It belongs to the NRP synthetase family. Requires pantetheine 4'-phosphate as cofactor.

It carries out the reaction (S)-1-pyrroline-5-carboxylate + L-arginine + S-adenosyl-L-methionine + 2 ATP = peramine + 2 AMP + S-adenosyl-L-homocysteine + 2 diphosphate + H2O + 2 H(+). It functions in the pathway secondary metabolite biosynthesis. Its function is as follows. Nonribosomal peptide synthetase; part of the gene cluster that mediates the biosynthesis of pyrrolopyrazines, secondary metabolites showing insecticidal activity. The single multifunctional NRPS ppzA is responsible for the biosynthesis of peramine. The condensation domain of ppzA is proposed to catalyze formation of a peptide bond between 1-pyrroline-5-carboxylate and arginine. The methylation domain of ppzA would catalyze the N-methylation of the alpha-amino group of arginine. The reductase domain is proposed to be responsible for reduction of the thioester and the cyclization to form an iminium ion resulting in release from the peptide synthetase. Deprotonation of this intermediate and oxidation of the pyrroline ring would give rise to peramine. This final oxidation to give the pyrrole functionality may be spontaneous. In Epichloe species that produce only peramine, the peramine synthetase gene is not localized in a gene cluster, in contrast to Metarhizium species that contain additional pyrrolopyrazine biosynthesis genes. The 2-oxoglutarate-Fe(II) type oxidoreductase ppzC hydroxylates peramine to yield the newly identified compound 8-hydroxyperamine whereas ppzD converts L-proline into trans-4-hydroxy-L-proline, a precursor of peramine biosynthesis. The sequence is that of Peramine synthetase ppzA from Metarhizium rileyi (strain RCEF 4871) (Nomuraea rileyi).